A 443-amino-acid polypeptide reads, in one-letter code: Ribitol-5-phosphate xylosyltransferase 1 (443 aa).

The Cytoplasmic segment spans residues 1 to 9 (MRLTRKRLC). Residues 10–30 (SFLIALYCLFSLYAAYHVFFG) form a helical; Signal-anchor for type II membrane protein membrane-spanning segment. The Extracellular portion of the chain corresponds to 31–443 (RRRQAPAGSP…ESSFLMNNKS (413 aa)). The disordered stretch occupies residues 35-76 (APAGSPRGLRKGAAPARERRGREQSTLESEEWNPWEGDEKNE). Positions 50 to 59 (ARERRGREQS) are enriched in basic and acidic residues.

Belongs to the RXYLT1 family. Forms a complex composed of FKTN/fukutin, FKRP and RXYLT1/TMEM5.

It is found in the golgi apparatus membrane. The enzyme catalyses 3-O-[Rib-ol-P-Rib-ol-P-3-beta-D-GalNAc-(1-&gt;3)-beta-D-GlcNAc-(1-&gt;4)-(O-6-P-alpha-D-Man)]-Thr-[protein] + UDP-alpha-D-xylose = 3-O-[beta-D-Xyl-(1-&gt;4)-Rib-ol-P-Rib-ol-P-3-beta-D-GalNAc-(1-&gt;3)-beta-D-GlcNAc-(1-&gt;4)-(O-6-P-alpha-D-Man)]-Thr-[protein] + UDP + H(+). The protein operates within protein modification; protein glycosylation. In terms of biological role, acts as a UDP-D-xylose:ribitol-5-phosphate beta1,4-xylosyltransferase, which catalyzes the transfer of UDP-D-xylose to ribitol 5-phosphate (Rbo5P) to form the Xylbeta1-4Rbo5P linkage on O-mannosyl glycan. Participates in the biosynthesis of the phosphorylated O-mannosyl trisaccharide (N-acetylgalactosamine-beta-3-N-acetylglucosamine-beta-4-(phosphate-6-)mannose), a carbohydrate structure present in alpha-dystroglycan (DAG1), which is required for binding laminin G-like domain-containing extracellular proteins with high affinity. This Homo sapiens (Human) protein is Ribitol-5-phosphate xylosyltransferase 1.